Consider the following 2629-residue polypeptide: Protein DOP1 homolog (2629 aa).

Disordered stretches follow at residues 561–584 (NKGVPGTHTQGSSLEKSKSDSRLN), 605–652 (SASN…TPRS), 688–710 (AGNVHDAEEPKSAPPDPQSPQFY), 1278–1340 (MDES…SSSA), 1371–1395 (TYRLTREKTPGENSLNSVATDQTEH), 1435–1471 (ISKTSTDSNLSNSCSQAEPAPEGDPQGEEEATAATDS), and 1766–1785 (RQDTPPAAGDDSTGNTSPTR). 2 stretches are compositionally biased toward polar residues: residues 605–615 (SASNQSVGRQS) and 636–647 (ASDTGQQSSSDL). Residues 1307 to 1320 (DITDNSDSSDFESD) are compositionally biased toward acidic residues. Residues 1321–1333 (SELRETSLEKEDS) are compositionally biased toward basic and acidic residues. 2 stretches are compositionally biased toward polar residues: residues 1381 to 1391 (GENSLNSVATD) and 1435 to 1450 (ISKTSTDSNLSNSCSQ).

It belongs to the DOP1 family.

The protein resides in the golgi apparatus membrane. May be involved in protein traffic between late Golgi and early endosomes. The sequence is that of Protein DOP1 homolog from Drosophila pseudoobscura pseudoobscura (Fruit fly).